The following is a 447-amino-acid chain: Mannose/glucose-specific lectin (447 aa).

Tandem repeats lie at residues 1–149, 150–295, and 296–447. Residues 1–447 are 3 X approximate tandem repeats; it reads SLKGMISVGP…GIFVKPDTAV (447 aa). Jacalin-type lectin domains are found at residues 5 to 148, 153 to 294, and 300 to 443; these read MISV…FVQP, TISF…YVKP, and SISI…FVKP.

Belongs to the jacalin lectin family. Homodimer. The N-terminus is blocked.

Functionally, mannose/glucose specific lectin. Shows agglutinating activity against rabbit erythrocytes. The protein is Mannose/glucose-specific lectin of Parkia platycephala.